Here is a 228-residue protein sequence, read N- to C-terminus: Ribosomal RNA large subunit methyltransferase E (228 aa).

S-adenosyl-L-methionine is bound by residues Gly76, Trp78, Asp99, Asp115, and Asp139. Lys179 (proton acceptor) is an active-site residue.

It belongs to the class I-like SAM-binding methyltransferase superfamily. RNA methyltransferase RlmE family.

The protein resides in the cytoplasm. The enzyme catalyses uridine(2552) in 23S rRNA + S-adenosyl-L-methionine = 2'-O-methyluridine(2552) in 23S rRNA + S-adenosyl-L-homocysteine + H(+). Functionally, specifically methylates the uridine in position 2552 of 23S rRNA at the 2'-O position of the ribose in the fully assembled 50S ribosomal subunit. This chain is Ribosomal RNA large subunit methyltransferase E, found in Bradyrhizobium diazoefficiens (strain JCM 10833 / BCRC 13528 / IAM 13628 / NBRC 14792 / USDA 110).